The primary structure comprises 176 residues: MEIVYKPLDIRNEEQFASIKKLIDADLSEPYSIYVYRYFLNQWPELTYIAVDNKSGTPNIPIGCIVCKMDPHRNVRLRGYIGMLAVESTYRGHGIAKKLVEIAIDKMQREHCDEIMLETEVENSAALNLYEGMGFIRMKRMFRYYLNEGDAFKLILPLTEKSCTRSTFLMHGRLAT.

The N-acetyltransferase domain occupies 3–159 (IVYKPLDIRN…DAFKLILPLT (157 aa)).

This sequence belongs to the acetyltransferase family. MAK3 subfamily. In terms of assembly, component of the N-terminal acetyltransferase C (NatC) complex, which is composed of MAK3, MAK10 and MAK31.

The protein localises to the cytoplasm. The protein resides in the nucleus. The catalysed reaction is N-terminal L-methionyl-L-leucyl-[protein] + acetyl-CoA = N-terminal N(alpha)-acetyl-L-methionyl-L-leucyl-[protein] + CoA + H(+). It carries out the reaction N-terminal L-methionyl-L-isoleucyl-[protein] + acetyl-CoA = N-terminal N(alpha)-acetyl-L-methionyl-L-isoleucyl-[protein] + CoA + H(+). It catalyses the reaction N-terminal L-methionyl-L-phenylalanyl-[protein] + acetyl-CoA = N-terminal N(alpha)-acetyl-L-methionyl-L-phenylalanyl-[protein] + CoA + H(+). The enzyme catalyses N-terminal L-methionyl-L-tryptophyl-[protein] + acetyl-CoA = N-terminal N(alpha)-acetyl-L-methionyl-L-tryptophyl-[protein] + CoA + H(+). The catalysed reaction is N-terminal L-methionyl-L-tyrosyl-[protein] + acetyl-CoA = N-terminal N(alpha)-acetyl-L-methionyl-L-tyrosyl-[protein] + CoA + H(+). In terms of biological role, catalytic component of the NatC N-terminal acetyltransferase, which catalyzes acetylation of the N-terminus Met of L-A virus GAG protein and possibly GRH1. This chain is N-alpha-acetyltransferase 30 (MAK3), found in Saccharomyces cerevisiae (strain ATCC 204508 / S288c) (Baker's yeast).